A 641-amino-acid chain; its full sequence is Calpain-6 (641 aa).

Positions 26–343 constitute a Calpain catalytic domain; that stretch reads LFCDPTFLPE…FHKLNVCRNV (318 aa). The tract at residues 344-495 is domain III; the sequence is NNPVFGRKEL…IFSEVPVQLR (152 aa). The C2 domain occupies 498–621; that stretch reads TLDMPKMSCW…YLRKKGGPTA (124 aa).

The protein belongs to the peptidase C2 family. Interacts (via domain III) with microtubules. Interacts (via domain II) with ARHGEF2 (via the N-terminal zinc finger).

It localises to the cytoplasm. The protein localises to the perinuclear region. It is found in the cytoskeleton. Its subcellular location is the spindle. Microtubule-stabilizing protein that may be involved in the regulation of microtubule dynamics and cytoskeletal organization. May act as a regulator of RAC1 activity through interaction with ARHGEF2 to control lamellipodial formation and cell mobility. Does not seem to have protease activity as it has lost the active site residues. The chain is Calpain-6 (Capn6) from Rattus norvegicus (Rat).